A 299-amino-acid chain; its full sequence is 4-sulfomuconolactone hydrolase (299 aa).

It belongs to the metallo-dependent hydrolases superfamily. Sulfomuconolactone hydrolase family. As to quaternary structure, monomer. It depends on Zn(2+) as a cofactor.

It catalyses the reaction 4-sulfomuconolactone + H2O = maleylacetate + sulfite + 2 H(+). Functionally, involved in the degradation of 4-sulfocatechol which is a central intermediate in the degradation of substituted sulfonated benzenes. Catalyzes the hydrolytical desulfonation of 4-sulfomuconolactone to yield maleylacetate. This chain is 4-sulfomuconolactone hydrolase, found in Rhizobium radiobacter (Agrobacterium tumefaciens).